The chain runs to 331 residues: (E)-beta farnesene synthase MBR_03882 (331 aa).

This sequence belongs to the trichodiene synthase family.

It carries out the reaction (2E,6E)-farnesyl diphosphate = (E)-beta-farnesene + diphosphate. Its function is as follows. Terpene synthase that catalyzes the conversion of (2E,6E)-farnesyl diphosphate (FPP) into the volatile sesquiterpene (E)-beta-farnesene. This Metarhizium brunneum (strain ARSEF 3297) protein is (E)-beta farnesene synthase MBR_03882.